Reading from the N-terminus, the 473-residue chain is Bifunctional protein HldE (473 aa).

A ribokinase region spans residues 1 to 318; sequence MKLTLPRYDQ…RAVQREEGSE (318 aa). Position 194-197 (194-197) interacts with ATP; that stretch reads NLHE. Aspartate 263 is a catalytic residue. Residues 343-473 are cytidylyltransferase; the sequence is FTNGCFDILH…TAIVEKIRNK (131 aa).

In the N-terminal section; belongs to the carbohydrate kinase PfkB family. It in the C-terminal section; belongs to the cytidylyltransferase family. In terms of assembly, homodimer.

The catalysed reaction is D-glycero-beta-D-manno-heptose 7-phosphate + ATP = D-glycero-beta-D-manno-heptose 1,7-bisphosphate + ADP + H(+). It carries out the reaction D-glycero-beta-D-manno-heptose 1-phosphate + ATP + H(+) = ADP-D-glycero-beta-D-manno-heptose + diphosphate. Its pathway is nucleotide-sugar biosynthesis; ADP-L-glycero-beta-D-manno-heptose biosynthesis; ADP-L-glycero-beta-D-manno-heptose from D-glycero-beta-D-manno-heptose 7-phosphate: step 1/4. The protein operates within nucleotide-sugar biosynthesis; ADP-L-glycero-beta-D-manno-heptose biosynthesis; ADP-L-glycero-beta-D-manno-heptose from D-glycero-beta-D-manno-heptose 7-phosphate: step 3/4. Its function is as follows. Catalyzes the phosphorylation of D-glycero-D-manno-heptose 7-phosphate at the C-1 position to selectively form D-glycero-beta-D-manno-heptose-1,7-bisphosphate. In terms of biological role, catalyzes the ADP transfer from ATP to D-glycero-beta-D-manno-heptose 1-phosphate, yielding ADP-D-glycero-beta-D-manno-heptose. In Ectopseudomonas mendocina (strain ymp) (Pseudomonas mendocina), this protein is Bifunctional protein HldE.